We begin with the raw amino-acid sequence, 904 residues long: Pantothenate kinase 2 (904 aa).

The tract at residues 1–56 is disordered; it reads MAANNNSDPILDEGGGGGVKHEAVGEAGEGKGGGGGAAATQAPAAMLPRSGSRPQL. The segment at 1–472 is pantothenate kinase; it reads MAANNNSDPI…LGDLNEKISW (472 aa). The 4'-phosphopantetheine phosphatase stretch occupies residues 473–904; sequence MEKFVQKGTQ…DCICKFEPVP (432 aa). Residues Asp735, Asn736, and Asp771 each contribute to the Mn(2+) site. Positions 855–859 match the Subfamily II EGMGR motif motif; sequence EGMGR.

The protein in the N-terminal section; belongs to the type II pantothenate kinase family. It in the C-terminal section; belongs to the damage-control phosphatase family. Phosphopantetheine phosphatase II subfamily. Mn(2+) serves as cofactor. Requires Ni(2+) as cofactor.

It catalyses the reaction (R)-pantothenate + ATP = (R)-4'-phosphopantothenate + ADP + H(+). The enzyme catalyses (R)-4'-phosphopantothenate + H2O = (R)-pantothenate + phosphate. It carries out the reaction (R)-4'-phosphopantetheine + H2O = (R)-pantetheine + phosphate. The catalysed reaction is (R)-4'-phosphopantetheine sulfonate + H2O = (R)-pantetheine sulfonate + phosphate. Its pathway is cofactor biosynthesis; coenzyme A biosynthesis; CoA from (R)-pantothenate: step 1/5. Catalyzes the phosphorylation of pantothenate the first step in CoA biosynthesis. May play a role in the physiological regulation of the intracellular CoA concentration. Functionally redudant with PANK1. The phosphatase activity shows preference for normal or oxidatively damaged intermediates of 4'-phosphopantetheine, which provides strong indirect evidence that the phosphatase activity pre-empts damage in the CoA pathway. Hydrolyzing excess 4'-phosphopantetheine could constitute a directed overflow mechanism to prevent its oxidation to the S-sulfonate, sulfonate, or other forms. Hydrolyzing 4'-phosphopantetheine sulfonate or S-sulfonate would forestall their conversion to inactive forms of CoA and acyl carrier protein. This is Pantothenate kinase 2 from Oryza sativa subsp. japonica (Rice).